The chain runs to 1461 residues: Regulation of nuclear pre-mRNA domain-containing protein 2 (1461 aa).

Ala-2 carries the post-translational modification N-acetylalanine. The residue at position 16 (Ser-16) is a Phosphoserine. The CID domain occupies 19–149 (SAGALESSLD…ALREALSTTF (131 aa)). 2 disordered regions span residues 311-438 (STLP…TSLS) and 469-504 (NTGV…TTSH). The segment covering 352–368 (ESEKSATPEPVTDNRDV) has biased composition (basic and acidic residues). A Phosphoserine modification is found at Ser-356. Residue Thr-358 is modified to Phosphothreonine. Over residues 369-378 (EDMELSDVED) the composition is skewed to acidic residues. Ser-374 is subject to Phosphoserine. Positions 379–394 (DGSKIIVEDRKEKPAE) are enriched in basic and acidic residues. Residues 397–416 (AVSTSVPTKPTENISKASSC) are compositionally biased toward polar residues. 2 stretches are compositionally biased toward low complexity: residues 417–426 (TPVPVTMTAT) and 473–491 (SPAS…NLTS). A phosphoserine mark is found at Ser-473, Ser-476, and Ser-479. Thr-482 bears the Phosphothreonine mark. At Ser-485 the chain carries Phosphoserine. Phosphothreonine is present on Thr-517. The tract at residues 547-623 (TGNPVPASEA…SPGLPSTTFK (77 aa)) is disordered. Residues 553–566 (ASEAASQSTSASPA) are compositionally biased toward low complexity. Ser-564 carries the post-translational modification Phosphoserine. Residues 567–583 (NTTVSTIKGRNLPSSAQ) show a composition bias toward polar residues. Ser-593 carries the phosphoserine modification. Low complexity predominate over residues 593-614 (SPNSSTSEVSSTSASKASIGQS). Thr-598 is modified (phosphothreonine). Phosphoserine is present on residues Ser-614, Ser-663, Ser-665, and Ser-716. Disordered stretches follow at residues 696 to 849 (GSSA…MMNL), 900 to 997 (SENC…EKVL), 1016 to 1102 (ASRK…SGEP), 1132 to 1312 (STSG…APPL), and 1340 to 1461 (FGVL…PPRY). A Phosphothreonine modification is found at Thr-723. Ser-730 is subject to Phosphoserine. Thr-732 is subject to Phosphothreonine. The segment covering 742 to 752 (PTSSSVDTMSL) has biased composition (polar residues). 2 positions are modified to phosphoserine: Ser-758 and Ser-762. Positions 758–768 (SPGSSTPSSTR) are enriched in low complexity. Thr-763 is subject to Phosphothreonine. Ser-769, Ser-817, Ser-826, Ser-900, Ser-909, Ser-928, Ser-965, and Ser-976 each carry phosphoserine. Positions 927-954 (RSPSPSKNDSFFTPDSNHNSLSQSTTGH) are enriched in polar residues. A compositionally biased stretch (polar residues) spans 1031–1055 (SKGTPSDGVSLSNLTQPSLTATDQQ). Phosphoserine occurs at positions 1068 and 1099. The span at 1141–1150 (GPSSASELAS) shows a compositional bias: low complexity. Over residues 1151 to 1160 (LGGGGSGGLT) the composition is skewed to gly residues. Positions 1174–1189 (FQESVGSFRSNSFNST) are enriched in polar residues. Composition is skewed to pro residues over residues 1267-1277 (FPTPPPPPPPG) and 1290-1299 (STPPPPPPPV). Asymmetric dimethylarginine is present on Arg-1366. Gly residues predominate over residues 1382-1391 (PHGGGGGGGS). Basic and acidic residues predominate over residues 1417 to 1434 (PRPDFRPREPFLSRDPFH). Residues Arg-1424 and Arg-1430 each carry the asymmetric dimethylarginine modification.

In terms of assembly, associates with the RNA polymerase II complex.

The protein is Regulation of nuclear pre-mRNA domain-containing protein 2 (RPRD2) of Homo sapiens (Human).